A 75-amino-acid chain; its full sequence is Small ribosomal subunit protein bS18 (75 aa).

The protein belongs to the bacterial ribosomal protein bS18 family. As to quaternary structure, part of the 30S ribosomal subunit. Forms a tight heterodimer with protein bS6.

Binds as a heterodimer with protein bS6 to the central domain of the 16S rRNA, where it helps stabilize the platform of the 30S subunit. In Chromobacterium violaceum (strain ATCC 12472 / DSM 30191 / JCM 1249 / CCUG 213 / NBRC 12614 / NCIMB 9131 / NCTC 9757 / MK), this protein is Small ribosomal subunit protein bS18.